A 580-amino-acid chain; its full sequence is Glutamine--tRNA ligase (580 aa).

The short motif at Pro-51 to His-61 is the 'HIGH' region element. ATP-binding positions include Glu-52 to Asn-54 and His-58 to Ser-64. L-glutamine-binding residues include Asp-84 and Tyr-233. ATP-binding positions include Thr-252 and Arg-287–Leu-288. Positions Ile-294 to Arg-298 match the 'KMSKS' region motif.

The protein belongs to the class-I aminoacyl-tRNA synthetase family. In terms of assembly, monomer.

It is found in the cytoplasm. The catalysed reaction is tRNA(Gln) + L-glutamine + ATP = L-glutaminyl-tRNA(Gln) + AMP + diphosphate. This Ralstonia nicotianae (strain ATCC BAA-1114 / GMI1000) (Ralstonia solanacearum) protein is Glutamine--tRNA ligase.